A 79-amino-acid chain; its full sequence is U-actitoxin-Avd8a (79 aa).

The first 19 residues, 1 to 19 (MKSLVIVFVVLLGVAMISA), serve as a signal peptide directing secretion. A propeptide spanning residues 20-36 (NEEELLAILQDQRNDAR) is cleaved from the precursor.

It belongs to the sea anemone 8 toxin family.

It localises to the secreted. It is found in the nematocyst. This Anemonia viridis (Snakelocks anemone) protein is U-actitoxin-Avd8a.